The chain runs to 433 residues: MVYEATPFDPITVKPSDKRRVAYFYDADVGNYAYGAGHPMKPHRIRMAHSLIMNYGLYKKMEIYRAKPATKQEMCQFHTDEYIDFLSRVTPDNLEMFKRESVKFNVGDDCPVFDGLYEYCSISGGGSMEGAARLNRGKCDVAVNYAGGLHHAKKSEASGFCYLNDIVLGIIELLRYHPRVLYIDIDVHHGDGVEEAFYTTDRVMTCSFHKYGEFFPGTGELRDIGVGAGKNYAVNVPLRDGIDDATYRSVFEPVIKKIMEWYQPSAVVLQCGGDSLSGDRLGCFNLSMEGHANCVNYVKSFGIPMMVVGGGGYTMRNVARTWCFETGLLNNVVLDKDLPYNEYYEYYGPDYKLSVRPSNMFNVNTPEYLDKVMTNIFANLENTKYAPSVQLNHTPRDAEDLGDVEEDSAEAKDTKGGSQYARDLHVEHDNEFY.

The tract at residues 19 to 331 (RRVAYFYDAD…WCFETGLLNN (313 aa)) is histone deacetylase. His151 is a catalytic residue. The ESA1-RPD3 motif signature appears at 320-340 (RTWCFETGLLNNVVLDKDLPY). Residues 388 to 433 (SVQLNHTPRDAEDLGDVEEDSAEAKDTKGGSQYARDLHVEHDNEFY) form a disordered region. Thr394 is modified (phosphothreonine). Ser408 bears the Phosphoserine mark. The segment covering 422-433 (RDLHVEHDNEFY) has biased composition (basic and acidic residues).

It belongs to the histone deacetylase family. HD type 1 subfamily. Component of the RPD3C(L) complex composed of at least ASH1, CTI6, DEP1, PHO23, RPD3, RXT2, RXT3, SAP30, SDS3, SIN3, UME1 and UME6. Component of the RPD3C(S) complex composed of at least EAF3, RCO1, RPD3, SIN3, and UME1. Interacts with cyclophilins CPR1, CPR6 and CPR7, with the kinase HOG1, and with ESS1, CYC8 and HAC1.

The protein localises to the cytoplasm. It is found in the nucleus. It carries out the reaction N(6)-acetyl-L-lysyl-[histone] + H2O = L-lysyl-[histone] + acetate. Catalytic component of the RPD3 histone deacetylase (HDAC) complexes RPD3C(L) and RPD3C(S) responsible for the deacetylation of lysine residues on the N-terminal part of the core histones (H2A, H2B, H3 and H4). Histone deacetylation plays an important role in transcriptional regulation, cell cycle progression, DNA damage response, osmotic stress response and developmental events. Is involved in rDNA and telomere silencing and in double strand breaks repair. Required for both full transcription repression and activation of many genes including cell type-specific genes (STE6, TY2 and HO), cell differentiation-specific genes (SPO13), genes that respond to external signals (PHO5) and TRK2. The RPD3 complexes regulate also chromosomal replication timing. The sequence is that of Histone deacetylase RPD3 (RPD3) from Saccharomyces cerevisiae (strain ATCC 204508 / S288c) (Baker's yeast).